The chain runs to 415 residues: Arrestin red cell isoform 3 (415 aa).

The protein belongs to the arrestin family.

The protein localises to the cytoplasm. The chain is Arrestin red cell isoform 3 from Oncorhynchus mykiss (Rainbow trout).